Here is an 88-residue protein sequence, read N- to C-terminus: UPF0297 protein Ccel_2240 (88 aa).

It belongs to the UPF0297 family.

The chain is UPF0297 protein Ccel_2240 from Ruminiclostridium cellulolyticum (strain ATCC 35319 / DSM 5812 / JCM 6584 / H10) (Clostridium cellulolyticum).